We begin with the raw amino-acid sequence, 182 residues long: Carbonic anhydrase (182 aa).

Mg(2+)-binding residues include His64, His81, and His86.

Belongs to the gamma-class carbonic anhydrase family. Homotrimer. Mg(2+) serves as cofactor. The cofactor is Zn(2+).

It catalyses the reaction hydrogencarbonate + H(+) = CO2 + H2O. Functionally, reversible hydration of carbon dioxide. The sequence is that of Carbonic anhydrase from Geobacillus kaustophilus (strain HTA426).